Consider the following 191-residue polypeptide: Protein Ves (191 aa).

This sequence belongs to the Ves family.

This is Protein Ves from Escherichia coli (strain 55989 / EAEC).